We begin with the raw amino-acid sequence, 275 residues long: MSSEKSSFPEKPPSFEKPSHSNTADHTRSGVHYFFAGWRLISLPGIRRFVILPLLMNIVLMGGAFWWLFTQLNDWIPQIMSHIPSWLQWLSYLIWPLAVLSILLVFSYLFSTIANFIAAPFNGLLAEQLEAKLTGQTLPDSGILSIAKDVPRIMKREVQKLAYYLPRAIVLLLLYFIPGIGQTVAPVLWFLFSAWMLAIQYCDYPFDNHKVGFSTMRQALRRHKVANMQFGALVSLFTLVPFLNLVIMPVAVCGATQLWVDRYRNLSATLPKKSP.

The segment at 1–24 (MSSEKSSFPEKPPSFEKPSHSNTA) is disordered. The segment covering 13–24 (PSFEKPSHSNTA) has biased composition (basic and acidic residues). 4 helical membrane passes run 49-69 (FVILPLLMNIVLMGGAFWWLF), 93-113 (LIWPLAVLSILLVFSYLFSTI), 169-189 (IVLLLLYFIPGIGQTVAPVLW), and 232-252 (ALVSLFTLVPFLNLVIMPVAV).

It belongs to the CysZ family.

It is found in the cell inner membrane. In terms of biological role, high affinity, high specificity proton-dependent sulfate transporter, which mediates sulfate uptake. Provides the sulfur source for the cysteine synthesis pathway. The chain is Sulfate transporter CysZ from Pectobacterium atrosepticum (strain SCRI 1043 / ATCC BAA-672) (Erwinia carotovora subsp. atroseptica).